The primary structure comprises 180 residues: 3-hexulose-6-phosphate isomerase (180 aa).

The 135-residue stretch at 33 to 167 (LIDRIIKAKK…IAEIMKRLNL (135 aa)) folds into the SIS domain. Substrate contacts are provided by residues S51 and 90–95 (SGSGRT). Catalysis depends on E147, which acts as the Proton acceptor.

It belongs to the SIS family. PHI subfamily. As to quaternary structure, homotetramer.

The enzyme catalyses D-arabino-hex-3-ulose 6-phosphate = beta-D-fructose 6-phosphate. It participates in carbohydrate biosynthesis; D-ribose 5-phosphate biosynthesis. Its function is as follows. Catalyzes the isomerization between 3-hexulose 6-phosphate and fructose 6-phosphate. This Methanocaldococcus jannaschii (strain ATCC 43067 / DSM 2661 / JAL-1 / JCM 10045 / NBRC 100440) (Methanococcus jannaschii) protein is 3-hexulose-6-phosphate isomerase (phi).